The primary structure comprises 132 residues: Small ribosomal subunit protein uS8 (132 aa).

The protein belongs to the universal ribosomal protein uS8 family. Part of the 30S ribosomal subunit. Contacts proteins S5 and S12.

In terms of biological role, one of the primary rRNA binding proteins, it binds directly to 16S rRNA central domain where it helps coordinate assembly of the platform of the 30S subunit. This chain is Small ribosomal subunit protein uS8, found in Lactobacillus johnsonii (strain CNCM I-12250 / La1 / NCC 533).